We begin with the raw amino-acid sequence, 227 residues long: UPF0758 protein Rxyl_1530 (227 aa).

In terms of domain architecture, MPN spans 106 to 227 (VISSPADVDG…YFSMKEHGML (122 aa)). Histidine 177, histidine 179, and aspartate 190 together coordinate Zn(2+). A JAMM motif motif is present at residues 177–190 (HNHPSGRVEPSRED).

Belongs to the UPF0758 family.

In Rubrobacter xylanophilus (strain DSM 9941 / JCM 11954 / NBRC 16129 / PRD-1), this protein is UPF0758 protein Rxyl_1530.